Reading from the N-terminus, the 287-residue chain is tRNA pseudouridine synthase B (287 aa).

The active-site Nucleophile is Asp-38.

Belongs to the pseudouridine synthase TruB family. Type 1 subfamily.

The catalysed reaction is uridine(55) in tRNA = pseudouridine(55) in tRNA. Functionally, responsible for synthesis of pseudouridine from uracil-55 in the psi GC loop of transfer RNAs. The chain is tRNA pseudouridine synthase B from Aquifex aeolicus (strain VF5).